The following is a 219-amino-acid chain: NAD(P)H-quinone oxidoreductase subunit K 2 (219 aa).

[4Fe-4S] cluster is bound by residues cysteine 53, cysteine 54, cysteine 118, and cysteine 149.

The protein belongs to the complex I 20 kDa subunit family. As to quaternary structure, NDH-1 can be composed of about 15 different subunits; different subcomplexes with different compositions have been identified which probably have different functions. [4Fe-4S] cluster serves as cofactor.

Its subcellular location is the cellular thylakoid membrane. It carries out the reaction a plastoquinone + NADH + (n+1) H(+)(in) = a plastoquinol + NAD(+) + n H(+)(out). The catalysed reaction is a plastoquinone + NADPH + (n+1) H(+)(in) = a plastoquinol + NADP(+) + n H(+)(out). In terms of biological role, NDH-1 shuttles electrons from an unknown electron donor, via FMN and iron-sulfur (Fe-S) centers, to quinones in the respiratory and/or the photosynthetic chain. The immediate electron acceptor for the enzyme in this species is believed to be plastoquinone. Couples the redox reaction to proton translocation, and thus conserves the redox energy in a proton gradient. Cyanobacterial NDH-1 also plays a role in inorganic carbon-concentration. The sequence is that of NAD(P)H-quinone oxidoreductase subunit K 2 from Synechocystis sp. (strain ATCC 27184 / PCC 6803 / Kazusa).